An 886-amino-acid polypeptide reads, in one-letter code: DNA mismatch repair protein MutS (886 aa).

Residue 627–634 (GPNMGGKS) coordinates ATP. The tract at residues 834–857 (VECADAPAPSDATHPALDRLRDID) is disordered.

This sequence belongs to the DNA mismatch repair MutS family.

This protein is involved in the repair of mismatches in DNA. It is possible that it carries out the mismatch recognition step. This protein has a weak ATPase activity. This Burkholderia vietnamiensis (strain G4 / LMG 22486) (Burkholderia cepacia (strain R1808)) protein is DNA mismatch repair protein MutS.